The sequence spans 1048 residues: Protein argonaute 7 (1048 aa).

Residues 1-14 show a composition bias toward basic and acidic residues; it reads MEGEREGVVAKNED. Disordered regions lie at residues 1 to 50 and 121 to 141; these read MEGE…GSSG and KAAD…KKPP. The segment covering 16–37 has biased composition (gly residues); sequence AGGGGGGLGTGGNGGGGGGGSA. Residues 131-141 are compositionally biased toward basic residues; that stretch reads MWKHRPSKKPP. The region spanning 422-530 is the PAZ domain; that stretch reads KRCDFLKDLP…VPMELCVVCE (109 aa). The Piwi domain maps to 709-1017; it reads LLICVMERRH…AAYRGRLYLE (309 aa).

The protein belongs to the argonaute family. Ago subfamily. Expressed in the reproductive shoot apex.

Its function is as follows. Involved in the RNA silencing pathway. May bind to short RNAs such as microRNAs (miRNAs) or short interfering RNAs (siRNAs), and represses the translation of mRNAs which are complementary to them. Regulates shoot apical meristem (SAM) initiation and maintenance and leaf polarization through the trans-acting siRNAS (ta-siRNAs) pathway which probably modulates the expression of the ARF2, ARF3, ARF4, ARF14 and ARF15 genes. The sequence is that of Protein argonaute 7 (AGO7) from Oryza sativa subsp. japonica (Rice).